The primary structure comprises 126 residues: Histone H2B type 2-E (126 aa).

The span at 1–12 shows a compositional bias: low complexity; sequence MPEPAKSAPAPK. The interval 1–35 is disordered; it reads MPEPAKSAPAPKKGSKKAVTKAQKKDGKKRKRSRK. The residue at position 2 (proline 2) is an N-acetylproline. Position 3 is an ADP-ribosyl glutamic acid (glutamate 3). Lysine 6 bears the N6-(2-hydroxyisobutyryl)lysine; alternate mark. Lysine 6 carries the post-translational modification N6-(beta-hydroxybutyryl)lysine; alternate. Lysine 6 carries the post-translational modification N6-acetyllysine; alternate. At lysine 6 the chain carries N6-butyryllysine; alternate. Residue lysine 6 is modified to N6-crotonyllysine; alternate. The residue at position 6 (lysine 6) is an N6-lactoyllysine; alternate. A Glycyl lysine isopeptide (Lys-Gly) (interchain with G-Cter in SUMO2); alternate cross-link involves residue lysine 6. Serine 7 carries the post-translational modification ADP-ribosylserine. Position 12 is an N6-(beta-hydroxybutyryl)lysine; alternate (lysine 12). Lysine 12 and lysine 13 each carry N6-acetyllysine; alternate. N6-crotonyllysine; alternate is present on residues lysine 12 and lysine 13. Residue lysine 12 is modified to N6-lactoyllysine; alternate. Residue lysine 13 is modified to N6-(2-hydroxyisobutyryl)lysine; alternate. Serine 15 carries the phosphoserine; by STK4/MST1 modification. Lysine 16, lysine 17, lysine 21, and lysine 24 each carry N6-acetyllysine; alternate. N6-crotonyllysine; alternate is present on residues lysine 16, lysine 17, lysine 21, and lysine 24. Residues lysine 16, lysine 17, lysine 21, and lysine 24 each carry the N6-lactoyllysine; alternate modification. Lysine 17 and lysine 21 each carry N6-(beta-hydroxybutyryl)lysine; alternate. Lysine 17 carries the N6-glutaryllysine; alternate modification. N6-(2-hydroxyisobutyryl)lysine; alternate occurs at positions 21 and 24. Lysine 21 carries the post-translational modification N6-butyryllysine; alternate. Lysine 21 is covalently cross-linked (Glycyl lysine isopeptide (Lys-Gly) (interchain with G-Cter in SUMO2); alternate). Lysine 25 is modified (N6-(2-hydroxyisobutyryl)lysine). An N6-(2-hydroxyisobutyryl)lysine; alternate modification is found at lysine 35. Lysine 35 carries the N6-(beta-hydroxybutyryl)lysine; alternate modification. Lysine 35 carries the post-translational modification N6-crotonyllysine; alternate. At lysine 35 the chain carries N6-glutaryllysine; alternate. Lysine 35 carries the post-translational modification N6-succinyllysine; alternate. Lysine 35 participates in a covalent cross-link: Glycyl lysine isopeptide (Lys-Gly) (interchain with G-Cter in ubiquitin); alternate. Glutamate 36 is modified (polyADP-ribosyl glutamic acid). Residue serine 37 is modified to Phosphoserine; by AMPK. An N6-(2-hydroxyisobutyryl)lysine; alternate mark is found at lysine 44, lysine 47, and lysine 58. The residue at position 44 (lysine 44) is an N6-lactoyllysine; alternate. 2 positions are modified to N6-glutaryllysine; alternate: lysine 44 and lysine 47. The residue at position 47 (lysine 47) is an N6-methyllysine; alternate. Position 58 is an N6,N6-dimethyllysine; alternate (lysine 58). Position 80 is a dimethylated arginine (arginine 80). An N6-(2-hydroxyisobutyryl)lysine; alternate modification is found at lysine 86. N6-(beta-hydroxybutyryl)lysine; alternate is present on lysine 86. Lysine 86 is modified (N6-acetyllysine; alternate). Lysine 86 is modified (N6-lactoyllysine; alternate). Lysine 86 carries the post-translational modification N6,N6,N6-trimethyllysine; alternate. Residues arginine 87 and arginine 93 each carry the omega-N-methylarginine modification. N6-(2-hydroxyisobutyryl)lysine; alternate is present on lysine 109. Lysine 109 carries the post-translational modification N6-lactoyllysine; alternate. Lysine 109 carries the post-translational modification N6-glutaryllysine; alternate. Position 109 is an N6-methyllysine; alternate (lysine 109). O-linked (GlcNAc) serine glycosylation occurs at serine 113. Threonine 116 bears the Phosphothreonine mark. Residues lysine 117 and lysine 121 each carry the N6-(2-hydroxyisobutyryl)lysine; alternate modification. Residues lysine 117 and lysine 121 each carry the N6-(beta-hydroxybutyryl)lysine; alternate modification. N6-lactoyllysine; alternate occurs at positions 117 and 121. 2 positions are modified to N6-glutaryllysine; alternate: lysine 117 and lysine 121. 2 positions are modified to N6-succinyllysine; alternate: lysine 117 and lysine 121. Lysine 117 carries the N6-malonyllysine; alternate modification. The residue at position 117 (lysine 117) is an N6-methylated lysine; alternate. Residue lysine 121 forms a Glycyl lysine isopeptide (Lys-Gly) (interchain with G-Cter in ubiquitin); alternate linkage.

The protein belongs to the histone H2B family. In terms of assembly, the nucleosome is a histone octamer containing two molecules each of H2A, H2B, H3 and H4 assembled in one H3-H4 heterotetramer and two H2A-H2B heterodimers. The octamer wraps approximately 147 bp of DNA. In terms of processing, monoubiquitination at Lys-35 (H2BK34Ub) by the MSL1/MSL2 dimer is required for histone H3 'Lys-4' (H3K4me) and 'Lys-79' (H3K79me) methylation and transcription activation at specific gene loci, such as HOXA9 and MEIS1 loci. Similarly, monoubiquitination at Lys-121 (H2BK120Ub) by the RNF20/40 complex gives a specific tag for epigenetic transcriptional activation and is also prerequisite for histone H3 'Lys-4' and 'Lys-79' methylation. It also functions cooperatively with the FACT dimer to stimulate elongation by RNA polymerase II. H2BK120Ub also acts as a regulator of mRNA splicing: deubiquitination by USP49 is required for efficient cotranscriptional splicing of a large set of exons. Phosphorylation at Ser-37 (H2BS36ph) by AMPK in response to stress promotes transcription. Phosphorylated on Ser-15 (H2BS14ph) by STK4/MST1 during apoptosis; which facilitates apoptotic chromatin condensation. Also phosphorylated on Ser-15 in response to DNA double strand breaks (DSBs), and in correlation with somatic hypermutation and immunoglobulin class-switch recombination. Post-translationally, glcNAcylation at Ser-113 promotes monoubiquitination of Lys-121. It fluctuates in response to extracellular glucose, and associates with transcribed genes. In terms of processing, ADP-ribosylated by PARP1 or PARP2 on Ser-7 (H2BS6ADPr) in response to DNA damage. H2BS6ADPr promotes recruitment of CHD1L. Mono-ADP-ribosylated on Glu-3 (H2BE2ADPr) by PARP3 in response to single-strand breaks. Poly ADP-ribosylation on Glu-36 (H2BE35ADPr) by PARP1 regulates adipogenesis: it inhibits phosphorylation at Ser-37 (H2BS36ph), thereby blocking expression of pro-adipogenetic genes. Crotonylation (Kcr) is specifically present in male germ cells and marks testis-specific genes in post-meiotic cells, including X-linked genes that escape sex chromosome inactivation in haploid cells. Crotonylation marks active promoters and enhancers and confers resistance to transcriptional repressors. It is also associated with post-meiotically activated genes on autosomes. Post-translationally, lactylated in macrophages by EP300/P300 by using lactoyl-CoA directly derived from endogenous or exogenous lactate, leading to stimulates gene transcription.

It localises to the nucleus. Its subcellular location is the chromosome. In terms of biological role, core component of nucleosome. Nucleosomes wrap and compact DNA into chromatin, limiting DNA accessibility to the cellular machineries which require DNA as a template. Histones thereby play a central role in transcription regulation, DNA repair, DNA replication and chromosomal stability. DNA accessibility is regulated via a complex set of post-translational modifications of histones, also called histone code, and nucleosome remodeling. Functionally, has broad antibacterial activity. May contribute to the formation of the functional antimicrobial barrier of the colonic epithelium, and to the bactericidal activity of amniotic fluid. The sequence is that of Histone H2B type 2-E from Homo sapiens (Human).